The following is a 295-amino-acid chain: 2S seed storage protein (295 aa).

The signal sequence occupies residues 1 to 20 (MAKQIVLALAFAALVAFATA). Residues 21–161 (HTTIITTTIE…TITTTVTESN (141 aa)) constitute a propeptide that is removed on maturation. The segment covering 195-208 (EQQMQQSPRSTRPY) has biased composition (polar residues). The tract at residues 195-215 (EQQMQQSPRSTRPYQQRPGQQ) is disordered.

The protein belongs to the 2S seed storage albumins family. In terms of processing, the 38 kDa precursor may be cleaved into two polypeptides of approximately the same size. The mature protein is composed of a single polypeptide containing one or more intra-molecular disulfide linkages.

This is a 2S seed storage protein. The chain is 2S seed storage protein (HAG5) from Helianthus annuus (Common sunflower).